Consider the following 152-residue polypeptide: 6,7-dimethyl-8-ribityllumazine synthase (152 aa).

5-amino-6-(D-ribitylamino)uracil-binding positions include Phe-24, 56–58 (SFE), and 80–82 (VVV). 85 to 86 (ET) provides a ligand contact to (2S)-2-hydroxy-3-oxobutyl phosphate. Residue His-88 is the Proton donor of the active site. Phe-113 contacts 5-amino-6-(D-ribitylamino)uracil. Position 127 (Arg-127) interacts with (2S)-2-hydroxy-3-oxobutyl phosphate.

This sequence belongs to the DMRL synthase family.

It catalyses the reaction (2S)-2-hydroxy-3-oxobutyl phosphate + 5-amino-6-(D-ribitylamino)uracil = 6,7-dimethyl-8-(1-D-ribityl)lumazine + phosphate + 2 H2O + H(+). It functions in the pathway cofactor biosynthesis; riboflavin biosynthesis; riboflavin from 2-hydroxy-3-oxobutyl phosphate and 5-amino-6-(D-ribitylamino)uracil: step 1/2. In terms of biological role, catalyzes the formation of 6,7-dimethyl-8-ribityllumazine by condensation of 5-amino-6-(D-ribitylamino)uracil with 3,4-dihydroxy-2-butanone 4-phosphate. This is the penultimate step in the biosynthesis of riboflavin. This chain is 6,7-dimethyl-8-ribityllumazine synthase, found in Thermococcus onnurineus (strain NA1).